The chain runs to 125 residues: Bublin coiled-coil protein (125 aa).

Positions 46 to 95 form a coiled coil; the sequence is IRKLDTQLDHLNDYMSKMEERLKAHNDRMMETLKQQKEEREKRRRSFHER. Residues 79–125 form a disordered region; that stretch reads KQQKEEREKRRRSFHERMSQNQSEDEEFKKQMSSILKRVQSVKRTEK.

In terms of tissue distribution, expressed in many epithelial tissues, including the pharynx, intestine, excretory canal and hypodermis.

It is found in the cell junction. It localises to the cytoplasm. The protein resides in the cytoskeleton. Functionally, dynamic component of the endotube in intestinal cells, interacts with intermediate filament and regulates intestinal lumen morphology. This chain is Bublin coiled-coil protein, found in Caenorhabditis elegans.